We begin with the raw amino-acid sequence, 163 residues long: Neurotrophin-3 (163 aa).

The signal sequence occupies residues 1-3 (IQS). The propeptide occupies 4 to 119 (TSMDQGILTE…VLNRTSRRKR (116 aa)). The N-linked (GlcNAc...) asparagine glycan is linked to asparagine 112.

It belongs to the NGF-beta family.

It localises to the secreted. Its function is as follows. Seems to promote the survival of visceral and proprioceptive sensory neurons. This chain is Neurotrophin-3 (NTF3), found in Eryx conicus (Rough-scaled sand boa).